A 108-amino-acid chain; its full sequence is Small ribosomal subunit protein bS6 (108 aa).

This sequence belongs to the bacterial ribosomal protein bS6 family.

Binds together with bS18 to 16S ribosomal RNA. This chain is Small ribosomal subunit protein bS6, found in Trichormus variabilis (strain ATCC 29413 / PCC 7937) (Anabaena variabilis).